Consider the following 341-residue polypeptide: MKALSKLKAEEGIWMTDVPVPELGHNDLLIKIRKTAICGTDVHIYNWDEWSQKTIPVPMVVGHEYVGEVVGIGQEVKGFKIGDRVSGEGHITCGHCRNCRGGRTHLCRNTIGVGVNRPGCFAEYLVIPAFNAFKIPDNISDDLASIFDPFGNAVHTALSFDLVGEDVLVSGAGPIGIMAAAVAKHVGARNVVITDVNEYRLELARKMGITRAVNVAKENLNDVMTELGMTEGFDVGLEMSGAPPAFRTMLDTMNHGGRIAMLGIPPSDMSIDWTKVIFKGLFIKGIYGREMFETWYKMAALIQSGLDLSPIITHRFSIDDFQKGFDAMRSGQSGKVILSWD.

C38 contributes to the Zn(2+) binding site. Catalysis depends on charge relay system residues T40 and H43. Zn(2+) contacts are provided by H63, E64, C93, C96, C99, and C107. NAD(+) contacts are provided by residues I175, D195, R200, 262–264 (LGI), and 286–287 (IY).

The protein belongs to the zinc-containing alcohol dehydrogenase family. As to quaternary structure, homotetramer. The cofactor is Zn(2+).

The protein localises to the cytoplasm. It carries out the reaction L-threonine + NAD(+) = (2S)-2-amino-3-oxobutanoate + NADH + H(+). Its pathway is amino-acid degradation; L-threonine degradation via oxydo-reductase pathway; glycine from L-threonine: step 1/2. Functionally, catalyzes the NAD(+)-dependent oxidation of L-threonine to 2-amino-3-ketobutyrate. This chain is L-threonine 3-dehydrogenase, found in Escherichia coli O127:H6 (strain E2348/69 / EPEC).